Reading from the N-terminus, the 798-residue chain is Transferrin receptor protein 2 (798 aa).

At 1–81 (MEQRWGLLRK…WAAAGRKAAP (81 aa)) the chain is on the cytoplasmic side. The Endocytosis signal signature appears at 23 to 26 (YRRV). The segment at 25–44 (RVEGPQLENLEEEDREEGEE) is disordered. The segment covering 33 to 44 (NLEEEDREEGEE) has biased composition (acidic residues). A helical; Signal-anchor for type II membrane protein transmembrane segment spans residues 82-102 (YLVLTTLLIFTGAFLLGYVAF). The Extracellular portion of the chain corresponds to 103–798 (RGSCQACGDS…GDVWNIDNNF (696 aa)). N-linked (GlcNAc...) asparagine glycans are attached at residues Asn-235, Asn-334, and Asn-535.

Belongs to the peptidase M28 family. M28B subfamily. In terms of assembly, homodimer.

The protein localises to the cell membrane. In terms of biological role, mediates cellular uptake of transferrin-bound iron in a non-iron dependent manner. May be involved in iron metabolism, hepatocyte function and erythrocyte differentiation. This is Transferrin receptor protein 2 (Tfr2) from Rattus norvegicus (Rat).